A 411-amino-acid chain; its full sequence is LL-diaminopimelate aminotransferase 1 (411 aa).

2 residues coordinate substrate: Tyr15 and Gly42. Pyridoxal 5'-phosphate is bound by residues Tyr72, 108–109 (SK), Tyr132, Asn187, Tyr218, and 246–248 (SFS). Positions 109, 132, and 187 each coordinate substrate. An N6-(pyridoxal phosphate)lysine modification is found at Lys249. Arg257 and Asn292 together coordinate pyridoxal 5'-phosphate. Substrate is bound by residues Asn292 and Arg388.

This sequence belongs to the class-I pyridoxal-phosphate-dependent aminotransferase family. LL-diaminopimelate aminotransferase subfamily. In terms of assembly, homodimer. Requires pyridoxal 5'-phosphate as cofactor.

The enzyme catalyses (2S,6S)-2,6-diaminopimelate + 2-oxoglutarate = (S)-2,3,4,5-tetrahydrodipicolinate + L-glutamate + H2O + H(+). Its pathway is amino-acid biosynthesis; L-lysine biosynthesis via DAP pathway; LL-2,6-diaminopimelate from (S)-tetrahydrodipicolinate (aminotransferase route): step 1/1. In terms of biological role, involved in the synthesis of meso-diaminopimelate (m-DAP or DL-DAP), required for both lysine and peptidoglycan biosynthesis. Catalyzes the direct conversion of tetrahydrodipicolinate to LL-diaminopimelate. The protein is LL-diaminopimelate aminotransferase 1 of Nostoc sp. (strain PCC 7120 / SAG 25.82 / UTEX 2576).